We begin with the raw amino-acid sequence, 263 residues long: Protein M1627_2099 (263 aa).

The protein belongs to the CinA family.

The protein is Protein M1627_2099 of Saccharolobus islandicus (strain M.16.27) (Sulfolobus islandicus).